Reading from the N-terminus, the 256-residue chain is Acetyl-coenzyme A carboxylase carboxyl transferase subunit alpha (256 aa).

A CoA carboxyltransferase C-terminal domain is found at 1–236 (MTDVSRVLKE…KANLIEQITS (236 aa)).

Belongs to the AccA family. As to quaternary structure, acetyl-CoA carboxylase is a heterohexamer composed of biotin carboxyl carrier protein (AccB), biotin carboxylase (AccC) and two subunits each of ACCase subunit alpha (AccA) and ACCase subunit beta (AccD).

The protein localises to the cytoplasm. It carries out the reaction N(6)-carboxybiotinyl-L-lysyl-[protein] + acetyl-CoA = N(6)-biotinyl-L-lysyl-[protein] + malonyl-CoA. Its pathway is lipid metabolism; malonyl-CoA biosynthesis; malonyl-CoA from acetyl-CoA: step 1/1. Its function is as follows. Component of the acetyl coenzyme A carboxylase (ACC) complex. First, biotin carboxylase catalyzes the carboxylation of biotin on its carrier protein (BCCP) and then the CO(2) group is transferred by the carboxyltransferase to acetyl-CoA to form malonyl-CoA. The sequence is that of Acetyl-coenzyme A carboxylase carboxyl transferase subunit alpha from Streptococcus pyogenes serotype M2 (strain MGAS10270).